Here is a 407-residue protein sequence, read N- to C-terminus: Lysophospholipid transporter LplT (407 aa).

Transmembrane regions (helical) follow at residues 18 to 38, 53 to 73, 91 to 111, 139 to 159, 163 to 183, 229 to 249, 257 to 277, 286 to 306, 310 to 330, 343 to 365, and 375 to 395; these read AVII…FATL, FLQM…GQIA, AGAL…LVGV, LMEA…GVLA, IYGA…ANML, WGAG…ALGI, LLNA…AKLV, LPAG…HNLM, SLLI…NALL, AIAV…YSLV, and IGIG…VWLI.

Belongs to the major facilitator superfamily. LplT (TC 2.A.1.42) family.

The protein resides in the cell inner membrane. Its function is as follows. Catalyzes the facilitated diffusion of 2-acyl-glycero-3-phosphoethanolamine (2-acyl-GPE) into the cell. This is Lysophospholipid transporter LplT from Pectobacterium carotovorum subsp. carotovorum (strain PC1).